A 299-amino-acid chain; its full sequence is ATP phosphoribosyltransferase (299 aa).

It belongs to the ATP phosphoribosyltransferase family. Long subfamily. Equilibrium between an active dimeric form, an inactive hexameric form and higher aggregates. Interconversion between the various forms is largely reversible and is influenced by the natural substrates and inhibitors of the enzyme. Requires Mg(2+) as cofactor.

It is found in the cytoplasm. The catalysed reaction is 1-(5-phospho-beta-D-ribosyl)-ATP + diphosphate = 5-phospho-alpha-D-ribose 1-diphosphate + ATP. Its pathway is amino-acid biosynthesis; L-histidine biosynthesis; L-histidine from 5-phospho-alpha-D-ribose 1-diphosphate: step 1/9. With respect to regulation, feedback inhibited by histidine. Functionally, catalyzes the condensation of ATP and 5-phosphoribose 1-diphosphate to form N'-(5'-phosphoribosyl)-ATP (PR-ATP). Has a crucial role in the pathway because the rate of histidine biosynthesis seems to be controlled primarily by regulation of HisG enzymatic activity. The polypeptide is ATP phosphoribosyltransferase (Escherichia coli O157:H7).